The primary structure comprises 825 residues: KH domain-containing protein YLL032C (825 aa).

The KH domain maps to 482 to 556 (PAEESFFIPE…ANICLAKNDL (75 aa)). The span at 727 to 740 (SSKSNTSNSNTNGN) shows a compositional bias: low complexity. The segment at 727-766 (SSKSNTSNSNTNGNFRSMNNAKSRTTIDNTSQSGASPQRH) is disordered. The span at 741–762 (FRSMNNAKSRTTIDNTSQSGAS) shows a compositional bias: polar residues. Ser762 carries the phosphoserine modification.

The protein localises to the cytoplasm. The chain is KH domain-containing protein YLL032C from Saccharomyces cerevisiae (strain ATCC 204508 / S288c) (Baker's yeast).